The following is a 598-amino-acid chain: Beta-fructofuranosidase, insoluble isoenzyme 2 (598 aa).

The signal sequence occupies residues M1 to A25. D69 is an active-site residue. N164, N189, and N348 each carry an N-linked (GlcNAc...) asparagine glycan.

Belongs to the glycosyl hydrolase 32 family.

It is found in the secreted. The protein resides in the extracellular space. The protein localises to the apoplast. It localises to the cell wall. It catalyses the reaction Hydrolysis of terminal non-reducing beta-D-fructofuranoside residues in beta-D-fructofuranosides.. May play a role in sucrose partitioning during seed development. This Oryza sativa subsp. indica (Rice) protein is Beta-fructofuranosidase, insoluble isoenzyme 2 (CIN2).